The following is a 338-amino-acid chain: Anthranilate phosphoribosyltransferase (338 aa).

Residues Gly-78, 81–82, Thr-86, 88–91, 106–114, and Ser-118 each bind 5-phospho-alpha-D-ribose 1-diphosphate; these read GD, NIST, and KHGNRSVSS. Residue Gly-78 participates in anthranilate binding. Ser-90 serves as a coordination point for Mg(2+). Asn-109 contributes to the anthranilate binding site. Residue Arg-164 coordinates anthranilate. Residues Asp-223 and Glu-224 each coordinate Mg(2+).

Belongs to the anthranilate phosphoribosyltransferase family. Homodimer. Mg(2+) serves as cofactor.

It carries out the reaction N-(5-phospho-beta-D-ribosyl)anthranilate + diphosphate = 5-phospho-alpha-D-ribose 1-diphosphate + anthranilate. The protein operates within amino-acid biosynthesis; L-tryptophan biosynthesis; L-tryptophan from chorismate: step 2/5. In terms of biological role, catalyzes the transfer of the phosphoribosyl group of 5-phosphorylribose-1-pyrophosphate (PRPP) to anthranilate to yield N-(5'-phosphoribosyl)-anthranilate (PRA). The sequence is that of Anthranilate phosphoribosyltransferase from Bacillus licheniformis (strain ATCC 14580 / DSM 13 / JCM 2505 / CCUG 7422 / NBRC 12200 / NCIMB 9375 / NCTC 10341 / NRRL NRS-1264 / Gibson 46).